A 259-amino-acid polypeptide reads, in one-letter code: Phosphatidylglycerol--prolipoprotein diacylglyceryl transferase (259 aa).

4 consecutive transmembrane segments (helical) span residues 16-36, 55-75, 92-112, and 117-137; these read FAIS…WFYA, FITY…VLLY, QGGM…YLFC, and VNFL…LFLG. An a 1,2-diacyl-sn-glycero-3-phospho-(1'-sn-glycerol)-binding site is contributed by R138. 3 consecutive transmembrane segments (helical) span residues 172–192, 201–221, and 228–248; these read QLYE…YATF, ALNL…IEIF, and IGFI…MLIL.

The protein belongs to the Lgt family.

Its subcellular location is the cell inner membrane. It catalyses the reaction L-cysteinyl-[prolipoprotein] + a 1,2-diacyl-sn-glycero-3-phospho-(1'-sn-glycerol) = an S-1,2-diacyl-sn-glyceryl-L-cysteinyl-[prolipoprotein] + sn-glycerol 1-phosphate + H(+). Its pathway is protein modification; lipoprotein biosynthesis (diacylglyceryl transfer). In terms of biological role, catalyzes the transfer of the diacylglyceryl group from phosphatidylglycerol to the sulfhydryl group of the N-terminal cysteine of a prolipoprotein, the first step in the formation of mature lipoproteins. In Rickettsia canadensis (strain McKiel), this protein is Phosphatidylglycerol--prolipoprotein diacylglyceryl transferase.